A 352-amino-acid chain; its full sequence is Outer membrane protein assembly factor BamC (352 aa).

Positions 1–19 (MQYWIPKALAVSVLVSLSG) are cleaved as a signal peptide. A lipid anchor (N-palmitoyl cysteine) is attached at cysteine 20. Cysteine 20 is lipidated: S-diacylglycerol cysteine.

It belongs to the BamC family. Part of the Bam complex.

Its subcellular location is the cell outer membrane. Part of the outer membrane protein assembly complex, which is involved in assembly and insertion of beta-barrel proteins into the outer membrane. The protein is Outer membrane protein assembly factor BamC of Pseudoalteromonas sp. (strain SM9913).